Consider the following 225-residue polypeptide: Probable septum site-determining protein MinC (225 aa).

Belongs to the MinC family. Interacts with MinD and FtsZ.

In terms of biological role, cell division inhibitor that blocks the formation of polar Z ring septums. Rapidly oscillates between the poles of the cell to destabilize FtsZ filaments that have formed before they mature into polar Z rings. Prevents FtsZ polymerization. In Listeria monocytogenes serotype 4a (strain HCC23), this protein is Probable septum site-determining protein MinC.